A 342-amino-acid polypeptide reads, in one-letter code: Phomopsin biosynthesis cluster protein B (342 aa).

The interval 1–22 (MESIAKAKSLPNKGRTYDSQRP) is disordered. The helical transmembrane segment at 87–107 (VLIIGCAVISLFAIIGALGFA) threads the bilayer. Residues 118–186 (CASPAHQNPH…QCGESPDEAQ (69 aa)) form a disordered region. The segment covering 144-155 (HSGSHSSSSSTN) has biased composition (low complexity). N-linked (GlcNAc...) asparagine glycosylation occurs at Asn248.

The protein resides in the membrane. Its function is as follows. Part of the gene cluster that mediates the biosynthesis of the phomopsins, a group of hexapeptide mycotoxins which infects lupins and causes lupinosis disease in livestock. The role of phomB within the phomopsins biosynthesis pathway has still to be determined. The pathway starts with the processing of the precursor phomA by several endopeptidases including kexin proteases as well as the cluster-specific S41 family peptidase phomP1 and the oligopeptidase phomG to produce 10 identical copies of the hexapeptide Tyr-Val-Ile-Pro-Ile-Asp. After being excised from the precursor peptide, the core peptides are cyclized and modified post-translationally by enzymes encoded within the gene cluster. The timing and order of proteolysis of the phomA precursor and PTMs are still unknown. Two tyrosinase-like enzymes, phomQ1 and phomQ2, catalyze the chlorination and hydroxylation of Tyr, respectively. PhomYb, is proposed to be involved in the construction of the macrocyclic structure. The other 4 ustYa family proteins may be involved in PTMs that generate the unique structure of phomopsin A. PhomYa is required for the hydroxylation of C-beta of Tyr. PhomYc, phomYd, and phomYe are responsible for the biosynthesis of 2,3-dehydroisoleucine (dIle), 2,3-dehydroaspartic acid (dAsp), and 3,4-dehydroproline (dPro), respectively. While dIle formation by phomYc is indispensable for the installation of dAsp by phomYd, the order of the other PTMs have not been elucidated yet. Most of the biosynthetic enzymes likely have broad substrate specificity, and thus, there might be a metabolic grid from a precursor to phomopsin A. The enzyme(s) responsible for the biosynthesis of 3,4-dehydrovaline (dVal) have also not been identified yet. Finally, phomM acts as an S-adenosylmethionine-dependent alpha-N-methyltransferase that catalyzes two successive N-methylation reactions, converting N-desmethyl-phomopsin A to phomopsin A and phomopsin A further to an N,N-dimethylated congener called phomopsin E. The chain is Phomopsin biosynthesis cluster protein B from Diaporthe leptostromiformis (Lupinosis disease fungus).